The sequence spans 60 residues: Large ribosomal subunit protein uL30 (60 aa).

This sequence belongs to the universal ribosomal protein uL30 family. Part of the 50S ribosomal subunit.

The protein is Large ribosomal subunit protein uL30 of Leptothrix cholodnii (strain ATCC 51168 / LMG 8142 / SP-6) (Leptothrix discophora (strain SP-6)).